Reading from the N-terminus, the 334-residue chain is tRNA methyltransferase 10 homolog A (334 aa).

2 disordered regions span residues 1–101 and 290–334; these read MSLE…SRKR and PLTE…EQNS. Residues 26–40 show a composition bias toward polar residues; it reads HAGNNTPLQENSSAP. Residues 62 to 94 are a coiled coil; that stretch reads KQWEDQRELRKQKRKEKRQKRKLERQAQAEHNI. A compositionally biased stretch (basic residues) spans 71-84; the sequence is RKQKRKEKRQKRKL. Basic and acidic residues predominate over residues 85 to 98; that stretch reads ERQAQAEHNIDANS. Residues 98–289 enclose the SAM-dependent MTase TRM10-type domain; the sequence is SRKRFRHEVQ…SVLPQRKGAI (192 aa). Residues 305-317 are compositionally biased toward acidic residues; that stretch reads QEDGEDSDSDSSI.

Belongs to the class IV-like SAM-binding methyltransferase superfamily. TRM10 family.

The enzyme catalyses guanosine(9) in tRNA + S-adenosyl-L-methionine = N(1)-methylguanosine(9) in tRNA + S-adenosyl-L-homocysteine + H(+). S-adenosyl-L-methionine-dependent guanine N(1)-methyltransferase that catalyzes the formation of N(1)-methylguanine at position 9 (m1G9) in tRNAs. Probably not able to catalyze formation of N(1)-methyladenine at position 9 (m1A9) in tRNAs. This is tRNA methyltransferase 10 homolog A (trmt10a) from Xenopus tropicalis (Western clawed frog).